A 226-amino-acid chain; its full sequence is Regulator of microtubule dynamics protein 1 (226 aa).

This sequence belongs to the FAM82/RMD family. In terms of assembly, interacts with air-2.

The protein resides in the cytoplasm. It is found in the cytoskeleton. Its subcellular location is the spindle pole. Acts in chromosome segregation and organization during mitosis. This is Regulator of microtubule dynamics protein 1 (rmd-1) from Caenorhabditis elegans.